A 299-amino-acid polypeptide reads, in one-letter code: Probable lipid kinase YegS (299 aa).

One can recognise a DAGKc domain in the interval 2 to 133; it reads AEFPASLLIL…IDMAQVNKQT (132 aa). Residues T40, 66 to 72, and T95 each bind ATP; that span reads GDGTINE. 3 residues coordinate Mg(2+): L215, D218, and L220. E271 (proton acceptor) is an active-site residue.

This sequence belongs to the diacylglycerol/lipid kinase family. YegS lipid kinase subfamily. Requires Mg(2+) as cofactor. It depends on Ca(2+) as a cofactor.

The protein resides in the cytoplasm. Functionally, probably phosphorylates lipids; the in vivo substrate is unknown. This chain is Probable lipid kinase YegS, found in Shigella dysenteriae serotype 1 (strain Sd197).